The chain runs to 376 residues: 23S rRNA (uracil(747)-C(5))-methyltransferase RlmC (376 aa).

Residues C3, C11, C14, and C87 each contribute to the [4Fe-4S] cluster site. Positions 212, 241, 262, and 307 each coordinate S-adenosyl-L-methionine. The active-site Nucleophile is the C334.

The protein belongs to the class I-like SAM-binding methyltransferase superfamily. RNA M5U methyltransferase family. RlmC subfamily.

It carries out the reaction uridine(747) in 23S rRNA + S-adenosyl-L-methionine = 5-methyluridine(747) in 23S rRNA + S-adenosyl-L-homocysteine + H(+). Its function is as follows. Catalyzes the formation of 5-methyl-uridine at position 747 (m5U747) in 23S rRNA. In Pectobacterium carotovorum subsp. carotovorum (strain PC1), this protein is 23S rRNA (uracil(747)-C(5))-methyltransferase RlmC.